Consider the following 349-residue polypeptide: MNRKARRCLGHLFLSLGMVYLRIGGFSTVVALGASIICNKIPGLAPRQRAICQSRPDAIIVIGEGSQMGLDECQFQFRNGRWNCSALGERTVFGKELKVGSREAAFTYAIIAAGVAHAITAACTQGNLSDCGCDKEKQGQYHRDEGWKWGGCSADIRYGIGFAKVFVDAREIKQNARTLMNLHNNEAGRKILEENMKLECKCHGVSGSCTTKTCWTTLPQFRELGYVLKDKYNEAVHVEPVRASRNKRPTFLKIKKPLSYRKPMDTDLVYIEKSPNYCEEDPVTGSVGTQGRACNKTAPQASGCDLMCCGRGYNTHQYARVWQCNCKFHWCCYVKCNTCSERTEMYTCK.

Positions 1 to 31 (MNRKARRCLGHLFLSLGMVYLRIGGFSTVVA) are cleaved as a signal peptide. Disulfide bonds link Cys-73–Cys-84, Cys-123–Cys-131, Cys-133–Cys-152, Cys-200–Cys-214, and Cys-202–Cys-209. Residues Asn-83 and Asn-127 are each glycosylated (N-linked (GlcNAc...) asparagine). The O-palmitoleoyl serine; by PORCN moiety is linked to residue Ser-206. Residues 238 to 266 (VEPVRASRNKRPTFLKIKKPLSYRKPMDT) are disordered linker. Intrachain disulfides connect Cys-278/Cys-309, Cys-294/Cys-304, Cys-308/Cys-348, Cys-324/Cys-339, Cys-326/Cys-336, and Cys-331/Cys-332. A glycan (N-linked (GlcNAc...) asparagine) is linked at Asn-295.

Belongs to the Wnt family. In terms of assembly, forms a soluble 1:1 complex with AFM; this prevents oligomerization and is required for prolonged biological activity. The complex with AFM may represent the physiological form in body fluids. Interacts with PORCN. Interacts (via intrinsically disordered linker region) with RECK; interaction with RECK confers ligand selectivity for Wnt7 in brain endothelial cells and allows these cells to selectively respond to Wnt7. Interacts with FZD5. Palmitoleoylation is required for efficient binding to frizzled receptors. Depalmitoleoylation leads to Wnt signaling pathway inhibition.

The protein resides in the secreted. Its subcellular location is the extracellular space. The protein localises to the extracellular matrix. In terms of biological role, ligand for members of the frizzled family of seven transmembrane receptors that functions in the canonical Wnt/beta-catenin signaling pathway. Plays an important role in embryonic development, including dorsal versus ventral patterning during limb development, skeleton development and urogenital tract development. Required for central nervous system (CNS) angiogenesis and blood-brain barrier regulation. Required for normal, sexually dimorphic development of the Mullerian ducts, and for normal fertility in both sexes. Required for normal neural stem cell proliferation in the hippocampus dentate gyrus. Required for normal progress through the cell cycle in neural progenitor cells, for self-renewal of neural stem cells, and for normal neuronal differentiation and maturation. Promotes formation of synapses via its interaction with FZD5. The protein is Protein Wnt-7a (WNT7A) of Chlorocebus aethiops (Green monkey).